The sequence spans 321 residues: MFKDINNYVKQNYVVKQIDNKIQVNYTKLLLMGEIDFIEKWPKDDTETIVEIKCVNSINIKYYMQLLLYNFCYYCTRPNSKYSLYRNSFKIINLLTGIEYIFSVSVTPGNMFTILNTLAKVGGLTFSGMNLVYDLETTGAIENQGPFEHKPVIQRSQIYFRNNKYYAIIYPEIIEIAIKDYETGLIIMNKLVKANSTLTLGIQNITGITPNMLVGQSTLDQIKVELEDKLKLFTACNMLAHNGNSFDNKIMLFYKLLNPQQVFFIDTLSVIPVHMESNSKLDKKNLSAIYYQLFKEKFQAHRAMNDVDALIKIMKYLKIEF.

In terms of domain architecture, Exonuclease spans 130–314 (NLVYDLETTG…NDVDALIKIM (185 aa)).

This is an uncharacterized protein from Acanthamoeba polyphaga (Amoeba).